Reading from the N-terminus, the 237-residue chain is Ribitol-5-phosphate cytidylyltransferase (237 aa).

CTP is bound by residues Leu-7–Gly-10, Gly-81–Ser-87, and Ser-112.

The protein belongs to the IspD/TarI cytidylyltransferase family. TarI subfamily.

It catalyses the reaction D-ribitol 5-phosphate + CTP + H(+) = CDP-L-ribitol + diphosphate. It functions in the pathway cell wall biogenesis; poly(ribitol phosphate) teichoic acid biosynthesis. Its function is as follows. Catalyzes the transfer of the cytidylyl group of CTP to D-ribitol 5-phosphate. This Bacillus spizizenii (strain ATCC 23059 / NRRL B-14472 / W23) (Bacillus subtilis subsp. spizizenii) protein is Ribitol-5-phosphate cytidylyltransferase.